Reading from the N-terminus, the 154-residue chain is Large ribosomal subunit protein uL15 (154 aa).

Positions 1–13 are enriched in basic and acidic residues; it reads MKLNELRDHEGAT. The segment at 1–44 is disordered; it reads MKLNELRDHEGATKNRKRIGRGIGSGTGKTGGCGVKGQKSRSGV. Gly residues predominate over residues 21-35; the sequence is RGIGSGTGKTGGCGV.

It belongs to the universal ribosomal protein uL15 family. Part of the 50S ribosomal subunit.

Its function is as follows. Binds to the 23S rRNA. This Bartonella bacilliformis (strain ATCC 35685 / KC583 / Herrer 020/F12,63) protein is Large ribosomal subunit protein uL15.